A 552-amino-acid polypeptide reads, in one-letter code: Chaperonin GroEL (552 aa).

Residues 30 to 33 (TLGP), Lys51, 87 to 91 (DGTTT), Gly415, 480 to 482 (NAA), and Asp496 contribute to the ATP site.

It belongs to the chaperonin (HSP60) family. As to quaternary structure, forms a cylinder of 14 subunits composed of two heptameric rings stacked back-to-back. Interacts with the co-chaperonin GroES.

The protein resides in the cytoplasm. The enzyme catalyses ATP + H2O + a folded polypeptide = ADP + phosphate + an unfolded polypeptide.. In terms of biological role, together with its co-chaperonin GroES, plays an essential role in assisting protein folding. The GroEL-GroES system forms a nano-cage that allows encapsulation of the non-native substrate proteins and provides a physical environment optimized to promote and accelerate protein folding. In Coxiella burnetii (strain RSA 331 / Henzerling II), this protein is Chaperonin GroEL.